Here is a 554-residue protein sequence, read N- to C-terminus: Formate--tetrahydrofolate ligase (554 aa).

Residue 65 to 72 (TPAGEGKT) participates in ATP binding.

Belongs to the formate--tetrahydrofolate ligase family.

It carries out the reaction (6S)-5,6,7,8-tetrahydrofolate + formate + ATP = (6R)-10-formyltetrahydrofolate + ADP + phosphate. The protein operates within one-carbon metabolism; tetrahydrofolate interconversion. The polypeptide is Formate--tetrahydrofolate ligase (Petrotoga mobilis (strain DSM 10674 / SJ95)).